Consider the following 340-residue polypeptide: 4-hydroxythreonine-4-phosphate dehydrogenase (340 aa).

Substrate-binding residues include His141 and Thr142. A divalent metal cation-binding residues include His171, His216, and His271. 3 residues coordinate substrate: Lys279, Asn288, and Arg297.

This sequence belongs to the PdxA family. As to quaternary structure, homodimer. Zn(2+) serves as cofactor. It depends on Mg(2+) as a cofactor. Co(2+) is required as a cofactor.

The protein localises to the cytoplasm. It carries out the reaction 4-(phosphooxy)-L-threonine + NAD(+) = 3-amino-2-oxopropyl phosphate + CO2 + NADH. The protein operates within cofactor biosynthesis; pyridoxine 5'-phosphate biosynthesis; pyridoxine 5'-phosphate from D-erythrose 4-phosphate: step 4/5. In terms of biological role, catalyzes the NAD(P)-dependent oxidation of 4-(phosphooxy)-L-threonine (HTP) into 2-amino-3-oxo-4-(phosphooxy)butyric acid which spontaneously decarboxylates to form 3-amino-2-oxopropyl phosphate (AHAP). The protein is 4-hydroxythreonine-4-phosphate dehydrogenase of Desulforapulum autotrophicum (strain ATCC 43914 / DSM 3382 / VKM B-1955 / HRM2) (Desulfobacterium autotrophicum).